The sequence spans 506 residues: Zinc finger protein 157 (506 aa).

The KRAB domain occupies 27–98; that stretch reads VSFEDVAVDF…EEESSGHGYS (72 aa). 12 C2H2-type zinc fingers span residues 162 to 184, 190 to 212, 218 to 240, 246 to 268, 274 to 296, 302 to 324, 330 to 352, 358 to 380, 386 to 408, 414 to 436, 442 to 464, and 470 to 492; these read FECHECGKAYCRKSNLVEHLRIH, YECGECAKTFSARSYLIAHQKTH, FECNECGKSFGRKSQLILHTRTH, YECTECGKTFSEKATLTIHQRTH, YECSECGKTFRVKISLTQHHRTH, YECGECGKNFRAKKSLNQHQRIH, YECGECGKFFRMKMTLNNHQRTH, YQCNECGKSFRVHSSLGIHQRIH, YECNECGNAFYVKARLIEHQRMH, YECSECGKIFSMKKSLCQHRRTH, YECSECGNAFYVKVRLIEHQRIH, and FECQECGKAFCRKAHLTEHQRTH.

The protein belongs to the krueppel C2H2-type zinc-finger protein family.

The protein localises to the nucleus. Functionally, may be involved in transcriptional regulation. This chain is Zinc finger protein 157 (ZNF157), found in Homo sapiens (Human).